The chain runs to 171 residues: Adenine phosphoribosyltransferase (171 aa).

The protein belongs to the purine/pyrimidine phosphoribosyltransferase family. As to quaternary structure, homodimer.

It is found in the cytoplasm. The enzyme catalyses AMP + diphosphate = 5-phospho-alpha-D-ribose 1-diphosphate + adenine. It participates in purine metabolism; AMP biosynthesis via salvage pathway; AMP from adenine: step 1/1. Its function is as follows. Catalyzes a salvage reaction resulting in the formation of AMP, that is energically less costly than de novo synthesis. This chain is Adenine phosphoribosyltransferase, found in Mesomycoplasma hyopneumoniae (strain 232) (Mycoplasma hyopneumoniae).